A 110-amino-acid chain; its full sequence is Nitrogenase-stabilizing/protective protein NifW (110 aa).

Belongs to the NifW family. As to quaternary structure, homotrimer; associates with NifD.

Its function is as follows. May protect the nitrogenase Fe-Mo protein from oxidative damage. The protein is Nitrogenase-stabilizing/protective protein NifW of Acidithiobacillus ferrooxidans (strain ATCC 23270 / DSM 14882 / CIP 104768 / NCIMB 8455) (Ferrobacillus ferrooxidans (strain ATCC 23270)).